A 214-amino-acid polypeptide reads, in one-letter code: ATP-dependent Clp protease proteolytic subunit (214 aa).

The Nucleophile role is filled by S106. The active site involves H131.

This sequence belongs to the peptidase S14 family. Fourteen ClpP subunits assemble into 2 heptameric rings which stack back to back to give a disk-like structure with a central cavity, resembling the structure of eukaryotic proteasomes.

Its subcellular location is the cytoplasm. It carries out the reaction Hydrolysis of proteins to small peptides in the presence of ATP and magnesium. alpha-casein is the usual test substrate. In the absence of ATP, only oligopeptides shorter than five residues are hydrolyzed (such as succinyl-Leu-Tyr-|-NHMec, and Leu-Tyr-Leu-|-Tyr-Trp, in which cleavage of the -Tyr-|-Leu- and -Tyr-|-Trp bonds also occurs).. Cleaves peptides in various proteins in a process that requires ATP hydrolysis. Has a chymotrypsin-like activity. Plays a major role in the degradation of misfolded proteins. The protein is ATP-dependent Clp protease proteolytic subunit of Rhodopseudomonas palustris (strain BisB5).